The primary structure comprises 318 residues: MSLTLSELQIRTLKQTLESSKIPFKSEVRLDILSSFKIGGICPVVVEPENSNQVLETLFIFYKSEIPWKILGGGSNLLISDHPDNFVTLRLSGKFKEFEYLEGGKFRIGSATNTTPTFRQISQLGYTGAEFLSTIPGWTGGAVIQNAGCYGGELFDLIQTVEFLRNNEIFVRSPSEIKHGYRFTEFLNEKDSIILGIEILLKEGNLEEIQTSLKDKRDRRNSSQPENKKSAGSVFKNPKIFLENGKEIKAWELIDQAGLRGQIKGGAQISPEHCNFIVNVGAATAADVNYLVELILDKVFQTTGIRLNREIEYFGDIP.

The region spanning 38–204 is the FAD-binding PCMH-type domain; it reads IGGICPVVVE…LGIEILLKEG (167 aa). Residue R182 is part of the active site. The disordered stretch occupies residues 212–232; that stretch reads SLKDKRDRRNSSQPENKKSAG. Residues 213-229 show a composition bias toward basic and acidic residues; it reads LKDKRDRRNSSQPENKK. Catalysis depends on S233, which acts as the Proton donor. The active site involves E310.

The protein belongs to the MurB family. FAD is required as a cofactor.

The protein resides in the cytoplasm. The catalysed reaction is UDP-N-acetyl-alpha-D-muramate + NADP(+) = UDP-N-acetyl-3-O-(1-carboxyvinyl)-alpha-D-glucosamine + NADPH + H(+). It participates in cell wall biogenesis; peptidoglycan biosynthesis. In terms of biological role, cell wall formation. In Leptospira borgpetersenii serovar Hardjo-bovis (strain L550), this protein is UDP-N-acetylenolpyruvoylglucosamine reductase.